The sequence spans 101 residues: NADH-quinone oxidoreductase subunit K (101 aa).

The next 3 membrane-spanning stretches (helical) occupy residues 4-24 (LPHYLVVAAILFTIGVFGIFV), 30-50 (IVILMSIELILLAVNINLVAF), and 61-81 (IFAMFVLTVAAAEAAVGLAIL).

The protein belongs to the complex I subunit 4L family. NDH-1 is composed of 14 different subunits. Subunits NuoA, H, J, K, L, M, N constitute the membrane sector of the complex.

The protein localises to the cell inner membrane. It carries out the reaction a quinone + NADH + 5 H(+)(in) = a quinol + NAD(+) + 4 H(+)(out). NDH-1 shuttles electrons from NADH, via FMN and iron-sulfur (Fe-S) centers, to quinones in the respiratory chain. The immediate electron acceptor for the enzyme in this species is believed to be ubiquinone. Couples the redox reaction to proton translocation (for every two electrons transferred, four hydrogen ions are translocated across the cytoplasmic membrane), and thus conserves the redox energy in a proton gradient. The polypeptide is NADH-quinone oxidoreductase subunit K (Caulobacter vibrioides (strain ATCC 19089 / CIP 103742 / CB 15) (Caulobacter crescentus)).